The sequence spans 82 residues: Small ribosomal subunit protein uS17 (82 aa).

The protein belongs to the universal ribosomal protein uS17 family. Part of the 30S ribosomal subunit.

Its function is as follows. One of the primary rRNA binding proteins, it binds specifically to the 5'-end of 16S ribosomal RNA. The protein is Small ribosomal subunit protein uS17 of Bradyrhizobium diazoefficiens (strain JCM 10833 / BCRC 13528 / IAM 13628 / NBRC 14792 / USDA 110).